The chain runs to 579 residues: Insulin-like growth factor 2 mRNA-binding protein 3 (579 aa).

2 RRM domains span residues 2–75 (NKLY…HSVP) and 81–156 (RKLQ…YIPD). The tract at residues 160 to 192 (AQQNPLQQPRGRRGLGQRGSSRQGSPGSVSKQK) is disordered. The span at 177–187 (RGSSRQGSPGS) shows a compositional bias: low complexity. Phosphoserine is present on Ser-184. KH domains follow at residues 195–260 (DLPL…CKSI), 276–343 (EIPL…EEEI), and 405–470 (TETV…QGRI). Glycyl lysine isopeptide (Lys-Gly) (interchain with G-Cter in SUMO2) cross-links involve residues Lys-450 and Lys-475. The region spanning 487–553 (KLEAHIRVPS…YACQVAQRKI (67 aa)) is the KH 4 domain. A Phosphothreonine modification is found at Thr-528.

This sequence belongs to the RRM IMP/VICKZ family. As to quaternary structure, can form homooligomers and heterooligomers with IGF2BP1 and IGF2BP3 in an RNA-dependent manner. Interacts with IGF2BP1. Interacts with ELAVL1, DHX9, HNRNPU, MATR3 and PABPC1. In terms of tissue distribution, expressed in fetal liver, fetal lung, fetal kidney, fetal thymus, fetal placenta, fetal follicles of ovary and gonocytes of testis, growing oocytes, spermatogonia and semen (at protein level). Expressed in cervix adenocarcinoma, in testicular, pancreatic and renal-cell carcinomas (at protein level). Expressed ubiquitously during fetal development at 8 and 14 weeks of gestation. Expressed in ovary, testis, brain, placenta, pancreatic cancer tissues and pancreatic cancer cell lines.

It localises to the nucleus. The protein localises to the cytoplasm. The protein resides in the P-body. Its subcellular location is the stress granule. RNA-binding factor that may recruit target transcripts to cytoplasmic protein-RNA complexes (mRNPs). This transcript 'caging' into mRNPs allows mRNA transport and transient storage. It also modulates the rate and location at which target transcripts encounter the translational apparatus and shields them from endonuclease attacks or microRNA-mediated degradation. Preferentially binds to N6-methyladenosine (m6A)-containing mRNAs and increases their stability. Binds to the 3'-UTR of CD44 mRNA and stabilizes it, hence promotes cell adhesion and invadopodia formation in cancer cells. Binds to beta-actin/ACTB and MYC transcripts. Increases MYC mRNA stability by binding to the coding region instability determinant (CRD) and binding is enhanced by m6A-modification of the CRD. Binds to the 5'-UTR of the insulin-like growth factor 2 (IGF2) mRNAs. In Homo sapiens (Human), this protein is Insulin-like growth factor 2 mRNA-binding protein 3 (IGF2BP3).